We begin with the raw amino-acid sequence, 706 residues long: mRNA (2'-O-methyladenosine-N(6)-)-methyltransferase (706 aa).

Residues 1-34 (MANENHGSPREGASLLSHSPGTSSQSQPCSPKPV) form a disordered region. The span at 16 to 29 (LSHSPGTSSQSQPC) shows a compositional bias: polar residues. Position 30 is a phosphoserine (Ser-30). The WW domain occupies 43–77 (ELVHAGWEKCWSRRESRPYYFNRFTNQSLWEMPVL). Positions 88–148 (GLNATPLPQD…QSVPSSPSIP (61 aa)) are disordered. The Nuclear localization signal motif lies at 109-113 (KSRKR). Ser-116 bears the Phosphoserine mark. Low complexity predominate over residues 132–147 (IPVTPTSQSVPSSPSI). Thr-152 is modified (phosphothreonine). Positions 234 and 264 each coordinate substrate. Residue 552-555 (NPPF) participates in S-adenosyl-L-methionine binding. Substrate is bound by residues Glu-557 and 587-591 (WREPP). An S-adenosyl-L-methionine-binding site is contributed by 613-615 (FEH). The segment at 663 to 706 (TAAYKQSGRSHGSSSSSSSSSSSSEAKDRDSGREQGPSREPHPT) is disordered. Residues 668–686 (QSGRSHGSSSSSSSSSSSS) carry the Nuclear localization signal motif. Over residues 675-686 (SSSSSSSSSSSS) the composition is skewed to low complexity. The span at 687 to 706 (EAKDRDSGREQGPSREPHPT) shows a compositional bias: basic and acidic residues.

The protein belongs to the CAPAM family. As to quaternary structure, interacts with POLR2A; interacts with the phosphorylated C-terminal domain (CTD) of POLR2A.

It localises to the nucleus. The enzyme catalyses a 5'-end (N(7)-methyl 5'-triphosphoguanosine)-(2'-O-methyladenosine) in mRNA + S-adenosyl-L-methionine = a 5'-end (N(7)-methyl 5'-triphosphoguanosine)-(N(6),2'-O-dimethyladenosine) in mRNA + S-adenosyl-L-homocysteine + H(+). With respect to regulation, cap-specific adenosine methyltransferase activity is inhibited by zinc. Cap-specific adenosine methyltransferase that catalyzes formation of N(6),2'-O-dimethyladenosine cap (m6A(m)) by methylating the adenosine at the second transcribed position of capped mRNAs. Recruited to the early elongation complex of RNA polymerase II (RNAPII) via interaction with POLR2A and mediates formation of m6A(m) co-transcriptionally. This Mus musculus (Mouse) protein is mRNA (2'-O-methyladenosine-N(6)-)-methyltransferase.